We begin with the raw amino-acid sequence, 318 residues long: Beta-ketoacyl-[acyl-carrier-protein] synthase III (318 aa).

Residues Cys113 and His245 contribute to the active site. Residues 246–250 are ACP-binding; that stretch reads QANIR. Residue Asn275 is part of the active site.

Belongs to the thiolase-like superfamily. FabH family. In terms of assembly, homodimer.

It is found in the cytoplasm. The catalysed reaction is malonyl-[ACP] + acetyl-CoA + H(+) = 3-oxobutanoyl-[ACP] + CO2 + CoA. It participates in lipid metabolism; fatty acid biosynthesis. Its function is as follows. Catalyzes the condensation reaction of fatty acid synthesis by the addition to an acyl acceptor of two carbons from malonyl-ACP. Catalyzes the first condensation reaction which initiates fatty acid synthesis and may therefore play a role in governing the total rate of fatty acid production. Possesses both acetoacetyl-ACP synthase and acetyl transacylase activities. Its substrate specificity determines the biosynthesis of branched-chain and/or straight-chain of fatty acids. This chain is Beta-ketoacyl-[acyl-carrier-protein] synthase III, found in Wolbachia pipientis wMel.